A 527-amino-acid polypeptide reads, in one-letter code: Bifunctional purine biosynthesis protein PurH (527 aa).

An MGS-like domain is found at 1 to 149 (MTADLLPVRR…KNFARVAVAT (149 aa)).

Belongs to the PurH family.

It catalyses the reaction (6R)-10-formyltetrahydrofolate + 5-amino-1-(5-phospho-beta-D-ribosyl)imidazole-4-carboxamide = 5-formamido-1-(5-phospho-D-ribosyl)imidazole-4-carboxamide + (6S)-5,6,7,8-tetrahydrofolate. It carries out the reaction IMP + H2O = 5-formamido-1-(5-phospho-D-ribosyl)imidazole-4-carboxamide. It functions in the pathway purine metabolism; IMP biosynthesis via de novo pathway; 5-formamido-1-(5-phospho-D-ribosyl)imidazole-4-carboxamide from 5-amino-1-(5-phospho-D-ribosyl)imidazole-4-carboxamide (10-formyl THF route): step 1/1. The protein operates within purine metabolism; IMP biosynthesis via de novo pathway; IMP from 5-formamido-1-(5-phospho-D-ribosyl)imidazole-4-carboxamide: step 1/1. The chain is Bifunctional purine biosynthesis protein PurH from Stenotrophomonas maltophilia (strain R551-3).